A 272-amino-acid chain; its full sequence is Shikimate dehydrogenase (NADP(+)) (272 aa).

Shikimate-binding positions include 14–16 (SLS) and threonine 61. The active-site Proton acceptor is the lysine 65. Position 102 (aspartate 102) interacts with shikimate. NADP(+) is bound by residues 127-131 (GAGGA), 151-156 (NRTPSK), and leucine 215. Tyrosine 217 contributes to the shikimate binding site. NADP(+) is bound at residue glycine 239.

The protein belongs to the shikimate dehydrogenase family. Homodimer.

It carries out the reaction shikimate + NADP(+) = 3-dehydroshikimate + NADPH + H(+). It functions in the pathway metabolic intermediate biosynthesis; chorismate biosynthesis; chorismate from D-erythrose 4-phosphate and phosphoenolpyruvate: step 4/7. Involved in the biosynthesis of the chorismate, which leads to the biosynthesis of aromatic amino acids. Catalyzes the reversible NADPH linked reduction of 3-dehydroshikimate (DHSA) to yield shikimate (SA). The sequence is that of Shikimate dehydrogenase (NADP(+)) from Coxiella burnetii (strain Dugway 5J108-111).